A 1584-amino-acid polypeptide reads, in one-letter code: Pentafunctional AROM polypeptide (1584 aa).

Residues 1-384 form a 3-dehydroquinate synthase region; the sequence is MSQDTDVVSV…YEKHATVVSD (384 aa). NAD(+) contacts are provided by residues 46-48, 83-86, 114-116, and aspartate 119; these read DTN, ETSK, and GGV. Residue arginine 130 coordinates 7-phospho-2-dehydro-3-deoxy-D-arabino-heptonate. 139 to 140 is a binding site for NAD(+); that stretch reads TT. The 7-phospho-2-dehydro-3-deoxy-D-arabino-heptonate site is built by aspartate 146 and lysine 152. Lysine 161 is an NAD(+) binding site. Asparagine 162 serves as a coordination point for 7-phospho-2-dehydro-3-deoxy-D-arabino-heptonate. Residues 179 to 182 and asparagine 190 contribute to the NAD(+) site; that span reads FLET. Residue glutamate 194 participates in Zn(2+) binding. 7-phospho-2-dehydro-3-deoxy-D-arabino-heptonate-binding positions include 194-197 and lysine 250; that span reads EVIK. Glutamate 260 functions as the Proton acceptor; for 3-dehydroquinate synthase activity in the catalytic mechanism. Residues 264 to 268 and histidine 271 each bind 7-phospho-2-dehydro-3-deoxy-D-arabino-heptonate; that span reads RNLLN. Histidine 271 contributes to the Zn(2+) binding site. The active-site Proton acceptor; for 3-dehydroquinate synthase activity is histidine 275. Residues histidine 287 and lysine 356 each coordinate 7-phospho-2-dehydro-3-deoxy-D-arabino-heptonate. Residue histidine 287 coordinates Zn(2+). The interval 397 to 843 is EPSP synthase; it reads VSPFDNSVSD…WDVLRNSFKI (447 aa). Cysteine 825 (for EPSP synthase activity) is an active-site residue. Residues 863-1058 are shikimate kinase; it reads RASVILIGMR…IQKPHSFFLS (196 aa). 870–877 contacts ATP; that stretch reads GMRGAGKT. Positions 1059-1280 are 3-dehydroquinase; sequence LTFPNINDAI…AAPGQLSVRQ (222 aa). Histidine 1182 acts as the Proton acceptor; for 3-dehydroquinate dehydratase activity in catalysis. Catalysis depends on lysine 1211, which acts as the Schiff-base intermediate with substrate; for 3-dehydroquinate dehydratase activity. Positions 1293–1584 are shikimate dehydrogenase; sequence PKKFYLFGTP…YMVLCAKEHN (292 aa).

The protein in the N-terminal section; belongs to the sugar phosphate cyclases superfamily. Dehydroquinate synthase family. This sequence in the 2nd section; belongs to the EPSP synthase family. It in the 3rd section; belongs to the shikimate kinase family. In the 4th section; belongs to the type-I 3-dehydroquinase family. The protein in the C-terminal section; belongs to the shikimate dehydrogenase family. In terms of assembly, homodimer. Zn(2+) serves as cofactor.

Its subcellular location is the cytoplasm. It carries out the reaction 7-phospho-2-dehydro-3-deoxy-D-arabino-heptonate = 3-dehydroquinate + phosphate. It catalyses the reaction 3-dehydroquinate = 3-dehydroshikimate + H2O. The enzyme catalyses shikimate + NADP(+) = 3-dehydroshikimate + NADPH + H(+). The catalysed reaction is shikimate + ATP = 3-phosphoshikimate + ADP + H(+). It carries out the reaction 3-phosphoshikimate + phosphoenolpyruvate = 5-O-(1-carboxyvinyl)-3-phosphoshikimate + phosphate. It participates in metabolic intermediate biosynthesis; chorismate biosynthesis; chorismate from D-erythrose 4-phosphate and phosphoenolpyruvate: step 2/7. It functions in the pathway metabolic intermediate biosynthesis; chorismate biosynthesis; chorismate from D-erythrose 4-phosphate and phosphoenolpyruvate: step 3/7. The protein operates within metabolic intermediate biosynthesis; chorismate biosynthesis; chorismate from D-erythrose 4-phosphate and phosphoenolpyruvate: step 4/7. Its pathway is metabolic intermediate biosynthesis; chorismate biosynthesis; chorismate from D-erythrose 4-phosphate and phosphoenolpyruvate: step 5/7. It participates in metabolic intermediate biosynthesis; chorismate biosynthesis; chorismate from D-erythrose 4-phosphate and phosphoenolpyruvate: step 6/7. The AROM polypeptide catalyzes 5 consecutive enzymatic reactions in prechorismate polyaromatic amino acid biosynthesis. The sequence is that of Pentafunctional AROM polypeptide from Schizosaccharomyces japonicus (strain yFS275 / FY16936) (Fission yeast).